The chain runs to 289 residues: NAD kinase (289 aa).

The Proton acceptor role is filled by Asp-63. NAD(+) contacts are provided by residues Asp-63 to Gly-64, Arg-68, Asn-138 to Asp-139, Arg-149, Asp-168, Thr-179 to Ser-184, and Gln-238.

The protein belongs to the NAD kinase family. The cofactor is a divalent metal cation.

The protein localises to the cytoplasm. It catalyses the reaction NAD(+) + ATP = ADP + NADP(+) + H(+). Functionally, involved in the regulation of the intracellular balance of NAD and NADP, and is a key enzyme in the biosynthesis of NADP. Catalyzes specifically the phosphorylation on 2'-hydroxyl of the adenosine moiety of NAD to yield NADP. The sequence is that of NAD kinase from Gemmatimonas aurantiaca (strain DSM 14586 / JCM 11422 / NBRC 100505 / T-27).